A 2389-amino-acid polypeptide reads, in one-letter code: Highly reducing polyketide synthase Dhc3 (2389 aa).

Residues 9-433 (DVPIAVVGLA…GTNGHAVLES (425 aa)) form the Ketosynthase family 3 (KS3) domain. Catalysis depends on for beta-ketoacyl synthase activity residues Cys181, His316, and His356. A malonyl-CoA:ACP transacylase (MAT) domain region spans residues 551-861 (FVFTGQGAQW…LSGPVEQILN (311 aa)). The For malonyltransferase activity role is filled by Ser641. The interval 944 to 1079 (RSLIGAQVPM…GLITIDYADT (136 aa)) is N-terminal hotdog fold. The PKS/mFAS DH domain occupies 944-1263 (RSLIGAQVPM…VSELENDTEA (320 aa)). A dehydratase (DH) domain region spans residues 946-1262 (LIGAQVPMMD…RVSELENDTE (317 aa)). His976 functions as the Proton acceptor; for dehydratase activity in the catalytic mechanism. Residues 1107 to 1263 (PDICSKEDFY…VSELENDTEA (157 aa)) are C-terminal hotdog fold. The active-site Proton donor; for dehydratase activity is the Asp1173. An enoylreductase (ER) domain region spans residues 1673–1987 (GLLDTLAFIE…QGKHRGKLVL (315 aa)). Residues 2011–2191 (ATYLFVGGLG…VAVDLGIMRD (181 aa)) are catalytic ketoreductase (KRc) domain. One can recognise a Carrier domain in the interval 2302-2379 (EAVSIITDAL…EFAEKIAEKS (78 aa)). Ser2339 is modified (O-(pantetheine 4'-phosphoryl)serine).

It functions in the pathway mycotoxin biosynthesis. Functionally, highly reducing polyketide synthase; part of the gene cluster that mediates the biosynthesis of 10,11-dehydrocurvularin, a prevalent fungal phytotoxin with heat shock response and immune-modulatory activities. The highly reducing polyketide synthase Dhc3 is responsible for biosynthesis up to the tetraketide stage. The non-reducing polyketide synthase Dhc5 then conducts four additional chain extension cycles, producing the unreduced part of the nascent octaketide from C-1 to C-8 in 10,11-dehydrocurvularin. This chain is Highly reducing polyketide synthase Dhc3 (Dhc3), found in Alternaria cinerariae.